The following is a 369-amino-acid chain: 4-hydroxy-3-methylbut-2-en-1-yl diphosphate synthase (flavodoxin) (369 aa).

[4Fe-4S] cluster is bound by residues Cys270, Cys273, Cys305, and Glu312.

The protein belongs to the IspG family. Requires [4Fe-4S] cluster as cofactor.

The catalysed reaction is (2E)-4-hydroxy-3-methylbut-2-enyl diphosphate + oxidized [flavodoxin] + H2O + 2 H(+) = 2-C-methyl-D-erythritol 2,4-cyclic diphosphate + reduced [flavodoxin]. It functions in the pathway isoprenoid biosynthesis; isopentenyl diphosphate biosynthesis via DXP pathway; isopentenyl diphosphate from 1-deoxy-D-xylulose 5-phosphate: step 5/6. Functionally, converts 2C-methyl-D-erythritol 2,4-cyclodiphosphate (ME-2,4cPP) into 1-hydroxy-2-methyl-2-(E)-butenyl 4-diphosphate. This Pseudomonas fluorescens (strain Pf0-1) protein is 4-hydroxy-3-methylbut-2-en-1-yl diphosphate synthase (flavodoxin).